The primary structure comprises 189 residues: Chitin synthase 1 (189 aa).

The protein belongs to the chitin synthase family. Class I subfamily.

The protein resides in the cell membrane. It catalyses the reaction [(1-&gt;4)-N-acetyl-beta-D-glucosaminyl](n) + UDP-N-acetyl-alpha-D-glucosamine = [(1-&gt;4)-N-acetyl-beta-D-glucosaminyl](n+1) + UDP + H(+). Its function is as follows. Polymerizes chitin, a structural polymer of the cell wall and septum, by transferring the sugar moiety of UDP-GlcNAc to the non-reducing end of the growing chitin polymer. The chain is Chitin synthase 1 (CHS1) from Exophiala jeanselmei (Dematiaceous fungus).